A 207-amino-acid chain; its full sequence is Pyridoxal 5'-phosphate synthase subunit PdxT (207 aa).

51–53 (GES) contacts L-glutamine. Residue cysteine 83 is the Nucleophile of the active site. L-glutamine contacts are provided by residues arginine 112 and 143–144 (IR). Active-site charge relay system residues include histidine 184 and glutamate 186.

This sequence belongs to the glutaminase PdxT/SNO family. In terms of assembly, in the presence of PdxS, forms a dodecamer of heterodimers. Only shows activity in the heterodimer.

It catalyses the reaction aldehydo-D-ribose 5-phosphate + D-glyceraldehyde 3-phosphate + L-glutamine = pyridoxal 5'-phosphate + L-glutamate + phosphate + 3 H2O + H(+). It carries out the reaction L-glutamine + H2O = L-glutamate + NH4(+). Its pathway is cofactor biosynthesis; pyridoxal 5'-phosphate biosynthesis. Catalyzes the hydrolysis of glutamine to glutamate and ammonia as part of the biosynthesis of pyridoxal 5'-phosphate. The resulting ammonia molecule is channeled to the active site of PdxS. In Kineococcus radiotolerans (strain ATCC BAA-149 / DSM 14245 / SRS30216), this protein is Pyridoxal 5'-phosphate synthase subunit PdxT.